A 271-amino-acid chain; its full sequence is Ribonuclease HII (271 aa).

An RNase H type-2 domain is found at 84–271; it reads VLIAGVDEVG…HRMSFLSNYI (188 aa). Residues Asp90, Glu91, and Asp187 each coordinate a divalent metal cation.

It belongs to the RNase HII family. Requires Mn(2+) as cofactor. Mg(2+) serves as cofactor.

Its subcellular location is the cytoplasm. It carries out the reaction Endonucleolytic cleavage to 5'-phosphomonoester.. Functionally, endonuclease that specifically degrades the RNA of RNA-DNA hybrids. This Clostridium tetani (strain Massachusetts / E88) protein is Ribonuclease HII.